Consider the following 639-residue polypeptide: Testicular spindle-associated protein SHCBP1L (639 aa).

Disordered regions lie at residues M1–V25 and V48–D75. The residue at position 3 (S3) is an O-acetylserine. Phosphoserine occurs at positions 8, 19, and 50. Over residues V54–L63 the composition is skewed to basic residues. The stretch at I285–E312 forms a coiled coil. PbH1 repeat units follow at residues S479–T500, G501–P523, G524–V557, and A560–Q582. K556 carries the post-translational modification N6-acetyllysine. At K631 the chain carries N6-acetyllysine.

Interacts with HSPA2; this interaction may promote the recruitment of HSPA2 to the spindle. As to expression, expressed in pachytene spermatocytes and elongating spermatids inside the seminiferous tubules. Not detected in ovary (at protein level). Testis-specific.

The protein resides in the cytoplasm. Its subcellular location is the cytoskeleton. It is found in the spindle. In terms of biological role, testis-specific spindle-associated factor that plays a role in spermatogenesis. In association with HSPA2, participates in the maintenance of spindle integrity during meiosis in male germ cells. This is Testicular spindle-associated protein SHCBP1L from Mus musculus (Mouse).